The sequence spans 651 residues: DNA mismatch repair protein MutL (651 aa).

The interval 383–405 (TAAEEPTPAPTSPDLEIGDLDDQ) is disordered.

It belongs to the DNA mismatch repair MutL/HexB family.

Its function is as follows. This protein is involved in the repair of mismatches in DNA. It is required for dam-dependent methyl-directed DNA mismatch repair. May act as a 'molecular matchmaker', a protein that promotes the formation of a stable complex between two or more DNA-binding proteins in an ATP-dependent manner without itself being part of a final effector complex. The chain is DNA mismatch repair protein MutL from Lacticaseibacillus paracasei (strain ATCC 334 / BCRC 17002 / CCUG 31169 / CIP 107868 / KCTC 3260 / NRRL B-441) (Lactobacillus paracasei).